The following is a 1086-amino-acid chain: NAD(P) transhydrogenase, mitochondrial (1086 aa).

The N-terminal 43 residues, 1 to 43 (MANLLKTVVTGCSCPFLSNLGSCKVLPGKKNFLRAFHTHRILW), are a transit peptide targeting the mitochondrion. The Mitochondrial matrix segment spans residues 44–474 (CKAPVKPGIP…TITPFRKTMT (431 aa)). N6-acetyllysine is present on lysine 70. Lysine 117 is subject to N6-succinyllysine. 182–184 (RVT) is a binding site for NAD(+). Position 224 is an N6-succinyllysine (lysine 224). Residues valine 237, 257 to 259 (DTR), and glycine 287 each bind NAD(+). Lysine 294 carries the N6-succinyllysine modification. Residues glutamate 300 and leucine 319 each contribute to the NAD(+) site. The residue at position 331 (lysine 331) is an N6-succinyllysine. Lysine 397 carries the post-translational modification N6-acetyllysine. 4 consecutive transmembrane segments (helical) span residues 475-493 (SASV…GIAA), 501-521 (MVTT…GVTP), 527-546 (LMSV…LVLM), and 558-578 (GLAA…FLVT). The Mitochondrial matrix segment spans residues 579 to 595 (QRMLDMFKRPTDPPEYN). A run of 5 helical transmembrane segments spans residues 596–616 (YLYL…LYSG), 622–642 (IMYL…STQG), 646–666 (LGNA…LGGL), 672–691 (LLAQ…LTIA), and 702–722 (LVAA…IAEY). Topologically, residues 723-739 (IIEYPHFATDAAANLTK) are cytoplasmic. 5 helical membrane passes run 740–760 (IVAY…LVAY), 778–797 (HLLN…PFMM), 801–819 (FTTG…AVMG), 833–853 (VVIT…GFLL), and 857–879 (LLTI…MCVA). At 880-1086 (MNRSLANVIL…QAKVRESYQK (207 aa)) the chain is on the mitochondrial matrix side. Residues tyrosine 933, 965–970 (VAGRMP), 1007–1011 (GANDT), 1026–1027 (GM), 1042–1049 (KRSLGVGY), and 1068–1069 (DA) each bind NADP(+). Lysine 1079 bears the N6-succinyllysine mark.

In the N-terminal section; belongs to the AlaDH/PNT family. The protein in the C-terminal section; belongs to the PNT beta subunit family. In terms of assembly, homodimer.

The protein resides in the mitochondrion inner membrane. The enzyme catalyses NAD(+) + NADPH + H(+)(in) = NADH + NADP(+) + H(+)(out). Its function is as follows. The transhydrogenation between NADH and NADP is coupled to respiration and ATP hydrolysis and functions as a proton pump across the membrane. May play a role in reactive oxygen species (ROS) detoxification in the adrenal gland. The protein is NAD(P) transhydrogenase, mitochondrial (NNT) of Ovis aries (Sheep).